A 217-amino-acid polypeptide reads, in one-letter code: Ribonuclease HII (217 aa).

The 184-residue stretch at 34–217 (WPVAGTDEAG…RMSFRPLKRD (184 aa)) folds into the RNase H type-2 domain. Positions 40, 41, and 131 each coordinate a divalent metal cation.

Belongs to the RNase HII family. Requires Mn(2+) as cofactor. The cofactor is Mg(2+).

The protein localises to the cytoplasm. The enzyme catalyses Endonucleolytic cleavage to 5'-phosphomonoester.. Endonuclease that specifically degrades the RNA of RNA-DNA hybrids. The chain is Ribonuclease HII from Agrobacterium fabrum (strain C58 / ATCC 33970) (Agrobacterium tumefaciens (strain C58)).